The sequence spans 384 residues: Putative glutamate--cysteine ligase 2-2 (384 aa).

This sequence belongs to the glutamate--cysteine ligase type 2 family. YbdK subfamily.

It carries out the reaction L-cysteine + L-glutamate + ATP = gamma-L-glutamyl-L-cysteine + ADP + phosphate + H(+). In terms of biological role, ATP-dependent carboxylate-amine ligase which exhibits weak glutamate--cysteine ligase activity. In Rubrobacter xylanophilus (strain DSM 9941 / JCM 11954 / NBRC 16129 / PRD-1), this protein is Putative glutamate--cysteine ligase 2-2.